A 323-amino-acid chain; its full sequence is HPr kinase/phosphorylase (323 aa).

Residues His-146 and Lys-167 contribute to the active site. Residue 161–168 (GESGLGKS) participates in ATP binding. Mg(2+) is bound at residue Ser-168. The active-site Proton acceptor; for phosphorylation activity. Proton donor; for dephosphorylation activity is Asp-185. The important for the catalytic mechanism of both phosphorylation and dephosphorylation stretch occupies residues 209 to 218 (LEVRGLGLLD). Residue Glu-210 participates in Mg(2+) binding. Residue Arg-250 is part of the active site. The important for the catalytic mechanism of dephosphorylation stretch occupies residues 271–276 (QVAAGR).

Belongs to the HPrK/P family. In terms of assembly, homohexamer. The cofactor is Mg(2+).

It carries out the reaction [HPr protein]-L-serine + ATP = [HPr protein]-O-phospho-L-serine + ADP + H(+). It catalyses the reaction [HPr protein]-O-phospho-L-serine + phosphate + H(+) = [HPr protein]-L-serine + diphosphate. Its function is as follows. Catalyzes the ATP- as well as the pyrophosphate-dependent phosphorylation of a specific serine residue in HPr, a phosphocarrier protein of the phosphoenolpyruvate-dependent sugar phosphotransferase system (PTS). HprK/P also catalyzes the pyrophosphate-producing, inorganic phosphate-dependent dephosphorylation (phosphorolysis) of seryl-phosphorylated HPr (P-Ser-HPr). The chain is HPr kinase/phosphorylase from Cupriavidus metallidurans (strain ATCC 43123 / DSM 2839 / NBRC 102507 / CH34) (Ralstonia metallidurans).